A 43-amino-acid polypeptide reads, in one-letter code: Cytochrome b559 subunit beta (43 aa).

Residues 18–34 (WLAIHGLAIPTVFFLGG) form a helical membrane-spanning segment. H22 is a heme binding site.

Belongs to the PsbE/PsbF family. As to quaternary structure, heterodimer of an alpha subunit and a beta subunit. PSII is composed of 1 copy each of membrane proteins PsbA, PsbB, PsbC, PsbD, PsbE, PsbF, PsbH, PsbI, PsbJ, PsbK, PsbL, PsbM, PsbT, PsbX, PsbY, PsbZ, Psb30/Ycf12, at least 3 peripheral proteins of the oxygen-evolving complex and a large number of cofactors. It forms dimeric complexes. Heme b is required as a cofactor.

The protein localises to the plastid. It localises to the chloroplast thylakoid membrane. Functionally, this b-type cytochrome is tightly associated with the reaction center of photosystem II (PSII). PSII is a light-driven water:plastoquinone oxidoreductase that uses light energy to abstract electrons from H(2)O, generating O(2) and a proton gradient subsequently used for ATP formation. It consists of a core antenna complex that captures photons, and an electron transfer chain that converts photonic excitation into a charge separation. The protein is Cytochrome b559 subunit beta of Phaeodactylum tricornutum (strain CCAP 1055/1).